The following is a 342-amino-acid chain: Dihydroorotase (342 aa).

The Zn(2+) site is built by H13 and H15. Residues 15–17 (HLR) and N41 each bind substrate. Residues K98, H135, and H173 each contribute to the Zn(2+) site. K98 carries the N6-carboxylysine modification. H135 is a substrate binding site. L218 serves as a coordination point for substrate. D246 lines the Zn(2+) pocket. The active site involves D246. Residues H250 and A262 each contribute to the substrate site.

This sequence belongs to the metallo-dependent hydrolases superfamily. DHOase family. Class II DHOase subfamily. As to quaternary structure, homodimer. Zn(2+) serves as cofactor.

It carries out the reaction (S)-dihydroorotate + H2O = N-carbamoyl-L-aspartate + H(+). It functions in the pathway pyrimidine metabolism; UMP biosynthesis via de novo pathway; (S)-dihydroorotate from bicarbonate: step 3/3. Its function is as follows. Catalyzes the reversible cyclization of carbamoyl aspartate to dihydroorotate. This is Dihydroorotase from Vibrio vulnificus (strain CMCP6).